We begin with the raw amino-acid sequence, 130 residues long: MPQTNPFHSLVPRKMTDTELARSIRLNIEAELDAINLYAAHIDATDNEDAKAILQHVMDEEREHAALFWELIARLDPEQAAHAKEAVEKYRLITSGASHEAVEAVGKEGAAPSPADVTPEKRLTVGSLRR.

The Fe cation site is built by E31, E61, and H64. Positions 61 to 64 (EREH) match the Di-iron-binding motif motif. Residues 103-130 (EAVGKEGAAPSPADVTPEKRLTVGSLRR) are disordered. Residues 123–130 (LTVGSLRR) are probable targeting peptide.

It belongs to the ferritin-like superfamily.

Its subcellular location is the encapsulin nanocompartment. Cargo protein of a type 1 encapsulin nanocompartment. May help nucleate Fe atoms in the interior of the encapsulin nanocompartment. Present in about 92 copies/encapsulin nanocompartment. The sequence is that of Encapsulin nanocompartment cargo protein EncC from Myxococcus xanthus (strain DK1622).